A 406-amino-acid chain; its full sequence is Membrane protein UL43 homolog (406 aa).

10 helical membrane passes run 48–68, 71–91, 103–123, 126–146, 162–182, 188–208, 266–286, 299–319, 339–359, and 386–406; these read LFLV…QYHV, AAVN…PTSV, CLQT…CPIS, LPFV…VAAV, IYFY…VILY, YEVL…VDAA, SVIP…SHII, LAVS…AVLY, IAVT…STVA, and VYHV…TYVS.

It belongs to the alphaherpesvirinae HHV-1 UL43 family.

The protein resides in the membrane. This is Membrane protein UL43 homolog from Varicella-zoster virus (strain Dumas) (HHV-3).